The chain runs to 347 residues: Transcription elongation factor A protein 3 (347 aa).

The TFIIS N-terminal domain occupies 5–82 (EELLRIAKKL…KNWKRLLDSP (78 aa)). Residues 83-100 (RTTKGEREEREKAKKEKG) show a composition bias toward basic and acidic residues. Residues 83–168 (RTTKGEREER…TTPSSPSTPT (86 aa)) form a disordered region. Phosphoserine is present on Ser-113. The span at 119–131 (GGGEPKTRRDSVD) shows a compositional bias: basic and acidic residues. Composition is skewed to low complexity over residues 132–142 (SRSSTTSSPKR) and 157–168 (TPTTPSSPSTPT). Ser-139 is subject to Phosphoserine. The 117-residue stretch at 186–302 (VRDKCVEMLS…EHQMAKTGGT (117 aa)) folds into the TFIIS central domain. The TFIIS-type zinc-finger motif lies at 305-345 (DLLRCSKCKKKNCTYNQVQTRSADEPMTTFVLCNECGNRWK). Zn(2+) contacts are provided by Cys-309, Cys-312, Cys-337, and Cys-340.

It belongs to the TFS-II family. As to expression, liver, kidney and heart.

Its subcellular location is the nucleus. Functionally, necessary for efficient RNA polymerase II transcription elongation past template-encoded arresting sites. The arresting sites in DNA have the property of trapping a certain fraction of elongating RNA polymerases that pass through, resulting in locked ternary complexes. Cleavage of the nascent transcript by S-II allows the resumption of elongation from the new 3'-terminus. This is Transcription elongation factor A protein 3 (Tcea3) from Mus musculus (Mouse).